The primary structure comprises 401 residues: Bifunctional sugar-1-phosphate nucleotidylyltransferase/acetyltransferase (401 aa).

The tract at residues 1-220 (MKAFILAAGS…KPWNIIDVNK (220 aa)) is nucleotidylyltransferase. A ribonucleoside 5'-triphosphate-binding positions include 8-13 (AGSGER), Gln73, and Gly79. Residues Thr80, Tyr97, Gly131, Glu146, and Asn157 each contribute to the N-acetyl-alpha-D-glucosamine 1-phosphate site. An acetyltransferase region spans residues 236-401 (EDNVKIKGKV…DVGYGEFFKV (166 aa)).

The protein in the N-terminal section; belongs to the N-acetylglucosamine-1-phosphate uridyltransferase family. In the C-terminal section; belongs to the transferase hexapeptide repeat family. Homotrimer. Co(2+) serves as cofactor. It depends on Mn(2+) as a cofactor.

It carries out the reaction dTTP + alpha-D-glucose 1-phosphate + H(+) = dTDP-alpha-D-glucose + diphosphate. The catalysed reaction is alpha-D-glucose 1-phosphate + UTP + H(+) = UDP-alpha-D-glucose + diphosphate. The enzyme catalyses N-acetyl-alpha-D-galactosamine 1-phosphate + UTP + H(+) = UDP-N-acetyl-alpha-D-galactosamine + diphosphate. It catalyses the reaction N-acetyl-alpha-D-glucosamine 1-phosphate + UTP + H(+) = UDP-N-acetyl-alpha-D-glucosamine + diphosphate. It carries out the reaction alpha-D-galactosamine 1-phosphate + acetyl-CoA = N-acetyl-alpha-D-galactosamine 1-phosphate + CoA + H(+). The catalysed reaction is alpha-D-glucosamine 1-phosphate + acetyl-CoA = N-acetyl-alpha-D-glucosamine 1-phosphate + CoA + H(+). The protein operates within nucleotide-sugar biosynthesis; UDP-N-acetyl-alpha-D-glucosamine biosynthesis; N-acetyl-alpha-D-glucosamine 1-phosphate from alpha-D-glucosamine 6-phosphate (route II): step 2/2. Its pathway is nucleotide-sugar biosynthesis; UDP-N-acetyl-alpha-D-glucosamine biosynthesis; UDP-N-acetyl-alpha-D-glucosamine from N-acetyl-alpha-D-glucosamine 1-phosphate: step 1/1. GlcN-1-P acetyltransferase activity is inhibited by divalent cations. GalN-1-P acetyltransferase activity is enhanced by Co(2+), Mg(2+) and Ca(2+), but inhibited by Zn(2+) or Mn(2+). Functionally, bifunctional enzyme involved in the synthesis of UDP-N-acetylglucosamine (UDP-GlcNAc) and UDP-N-acetylgalactosamine (UDP-GalNAc). It has multiple amino-sugar-1-phosphate acetyltransferase activities, including glucosamine-1-phosphate (GlcN-1-P) acetyltransferase and galactosamine-1-phosphate (GalN-1-P) acetyltransferase activities, and multiple sugar-1-phosphate nucleotidylyltransferase activities, including N-acetylglucosamine-1-phosphate (GlcNAc-1-P) uridyltransferase and N-acetylgalactosamine-1-phosphate (GalNAc-1-P) uridyltransferase activities. Also catalyzes the formation of dTDP-glucose from dTTP and glucose-1-phosphate (Glc-1-P), and the reverse reaction, which produces dTTP from dTDP-glucose and diphosphate. Can also catalyze the formation of UDP-glucose from UTP and glucose-1-phosphate. The chain is Bifunctional sugar-1-phosphate nucleotidylyltransferase/acetyltransferase from Sulfurisphaera tokodaii (strain DSM 16993 / JCM 10545 / NBRC 100140 / 7) (Sulfolobus tokodaii).